The sequence spans 635 residues: Signal recognition particle subunit SRP72 (635 aa).

TPR repeat units lie at residues glycine 7 to glutamate 42, glycine 75 to aspartate 105, valine 106 to aspartate 139, tyrosine 171 to serine 204, aspartate 220 to aspartate 253, serine 255 to lysine 290, and valine 436 to leucine 469. A disordered region spans residues lysine 539–phenylalanine 635. Residues aspartate 557 to threonine 569 are compositionally biased toward basic and acidic residues. Over residues lysine 625 to phenylalanine 635 the composition is skewed to basic residues.

This sequence belongs to the SRP72 family. As to quaternary structure, heterodimer with srpa-68. Srpa-68-srpa-72 heterodimer formation is stabilized by the presence of 7SL RNA. Component of a signal recognition particle (SRP) complex that consists of a 7SL RNA molecule of 300 nucleotides and six protein subunits: srpa-72, srpa-68, SRP54, F37F2.2/SRP19, F25G6.8/SRP14 and ZK512.4/SRP9. Within the SRP complex, interacts (via N-terminus) with srpa-68 (via C-terminus).

It localises to the cytoplasm. Its subcellular location is the endoplasmic reticulum. Functionally, component of the signal recognition particle (SRP) complex, a ribonucleoprotein complex that mediates the cotranslational targeting of secretory and membrane proteins to the endoplasmic reticulum (ER). The SRP complex interacts with the signal sequence in nascent secretory and membrane proteins and directs them to the membrane of the ER. The SRP complex targets the ribosome-nascent chain complex to the SRP receptor (SR), which is anchored in the ER, where SR compaction and GTPase rearrangement drive cotranslational protein translocation into the ER. Binds the signal recognition particle RNA (7SL RNA) in presence of srpa-68. Can bind 7SL RNA with low affinity. The SRP complex possibly participates in the elongation arrest function. The sequence is that of Signal recognition particle subunit SRP72 from Caenorhabditis elegans.